The primary structure comprises 367 residues: Glutamate 5-kinase (367 aa).

Lys-8 serves as a coordination point for ATP. Substrate-binding residues include Ser-49, Asp-136, and Asn-148. ATP-binding positions include 168 to 169 (TD) and 210 to 216 (TGGMATK). The region spanning 275 to 353 (TGKLLLDAGA…DQIVQILGYE (79 aa)) is the PUA domain.

This sequence belongs to the glutamate 5-kinase family.

It localises to the cytoplasm. The enzyme catalyses L-glutamate + ATP = L-glutamyl 5-phosphate + ADP. It participates in amino-acid biosynthesis; L-proline biosynthesis; L-glutamate 5-semialdehyde from L-glutamate: step 1/2. Its function is as follows. Catalyzes the transfer of a phosphate group to glutamate to form L-glutamate 5-phosphate. The sequence is that of Glutamate 5-kinase from Synechococcus elongatus (strain ATCC 33912 / PCC 7942 / FACHB-805) (Anacystis nidulans R2).